A 223-amino-acid polypeptide reads, in one-letter code: Deoxyribose-phosphate aldolase (223 aa).

Residue Asp-89 is the Proton donor/acceptor of the active site. Lys-152 functions as the Schiff-base intermediate with acetaldehyde in the catalytic mechanism. Catalysis depends on Lys-181, which acts as the Proton donor/acceptor.

This sequence belongs to the DeoC/FbaB aldolase family. DeoC type 1 subfamily.

The protein localises to the cytoplasm. The enzyme catalyses 2-deoxy-D-ribose 5-phosphate = D-glyceraldehyde 3-phosphate + acetaldehyde. Its pathway is carbohydrate degradation; 2-deoxy-D-ribose 1-phosphate degradation; D-glyceraldehyde 3-phosphate and acetaldehyde from 2-deoxy-alpha-D-ribose 1-phosphate: step 2/2. Functionally, catalyzes a reversible aldol reaction between acetaldehyde and D-glyceraldehyde 3-phosphate to generate 2-deoxy-D-ribose 5-phosphate. The polypeptide is Deoxyribose-phosphate aldolase (Listeria monocytogenes serotype 4b (strain F2365)).